A 434-amino-acid chain; its full sequence is Glutamate-1-semialdehyde 2,1-aminomutase (434 aa).

N6-(pyridoxal phosphate)lysine is present on Lys-265.

It belongs to the class-III pyridoxal-phosphate-dependent aminotransferase family. HemL subfamily. As to quaternary structure, homodimer. Requires pyridoxal 5'-phosphate as cofactor.

It is found in the cytoplasm. The enzyme catalyses (S)-4-amino-5-oxopentanoate = 5-aminolevulinate. It participates in porphyrin-containing compound metabolism; protoporphyrin-IX biosynthesis; 5-aminolevulinate from L-glutamyl-tRNA(Glu): step 2/2. This is Glutamate-1-semialdehyde 2,1-aminomutase from Ruminiclostridium cellulolyticum (strain ATCC 35319 / DSM 5812 / JCM 6584 / H10) (Clostridium cellulolyticum).